The chain runs to 515 residues: 2-isopropylmalate synthase (515 aa).

In terms of domain architecture, Pyruvate carboxyltransferase spans 4-266 (IKFFDTTLRD…ETRLNLQEIK (263 aa)). 4 residues coordinate Mn(2+): D13, H201, H203, and N237. The regulatory domain stretch occupies residues 391 to 515 (QLSSIQVQYG…RGENEKVATP (125 aa)).

The protein belongs to the alpha-IPM synthase/homocitrate synthase family. LeuA type 1 subfamily. As to quaternary structure, homodimer. Requires Mn(2+) as cofactor.

The protein localises to the cytoplasm. The enzyme catalyses 3-methyl-2-oxobutanoate + acetyl-CoA + H2O = (2S)-2-isopropylmalate + CoA + H(+). Its pathway is amino-acid biosynthesis; L-leucine biosynthesis; L-leucine from 3-methyl-2-oxobutanoate: step 1/4. Catalyzes the condensation of the acetyl group of acetyl-CoA with 3-methyl-2-oxobutanoate (2-ketoisovalerate) to form 3-carboxy-3-hydroxy-4-methylpentanoate (2-isopropylmalate). In Geobacillus kaustophilus (strain HTA426), this protein is 2-isopropylmalate synthase.